The following is a 380-amino-acid chain: N-acetylneuraminate epimerase (380 aa).

Residues 1–21 (MKFTKTALFTVLAATAFAAQA) form the signal peptide. Kelch repeat units follow at residues 42–86 (TVYV…AGVN), 88–140 (KLYV…AADG), 142–176 (KIYF…AIFD), 177–222 (PYFN…AIKD), 225–274 (LLVV…IAGG), 296–349 (ANYE…SYNN), and 351–380 (VLLI…LTVE). The active-site Proton acceptor is Glu-231.

It belongs to the NanM family. Homodimer.

Its subcellular location is the periplasm. It carries out the reaction N-acetyl-alpha-neuraminate = N-acetyl-beta-neuraminate. Its function is as follows. Converts alpha-N-acetylneuranimic acid (Neu5Ac) to the beta-anomer, accelerating the equilibrium between the alpha- and beta-anomers. Probably facilitates sialidase-negative bacteria to compete successfully for limited amounts of extracellular Neu5Ac, which is likely taken up in the beta-anomer. In addition, the rapid removal of sialic acid from solution might be advantageous to the bacterium to damp down host responses. This chain is N-acetylneuraminate epimerase, found in Pasteurella multocida (strain Pm70).